The primary structure comprises 262 residues: Tryptophan synthase alpha chain (262 aa).

Catalysis depends on proton acceptor residues Glu48 and Asp59.

It belongs to the TrpA family. As to quaternary structure, tetramer of two alpha and two beta chains.

The catalysed reaction is (1S,2R)-1-C-(indol-3-yl)glycerol 3-phosphate + L-serine = D-glyceraldehyde 3-phosphate + L-tryptophan + H2O. The protein operates within amino-acid biosynthesis; L-tryptophan biosynthesis; L-tryptophan from chorismate: step 5/5. Its function is as follows. The alpha subunit is responsible for the aldol cleavage of indoleglycerol phosphate to indole and glyceraldehyde 3-phosphate. The sequence is that of Tryptophan synthase alpha chain from Helicobacter pylori (strain P12).